A 77-amino-acid polypeptide reads, in one-letter code: Conotoxin VnMEKL-0223 (77 aa).

The N-terminal stretch at 1-19 is a signal peptide; that stretch reads MQKLTILLLVAAVLMSTQA. A propeptide spanning residues 20–37 is cleaved from the precursor; that stretch reads LIKGGGEKRPKEKIKFLS. Disulfide bonds link C51–C65, C58–C69, and C64–C74.

This sequence belongs to the conotoxin O2 superfamily. In terms of tissue distribution, expressed by the venom duct.

It localises to the secreted. The sequence is that of Conotoxin VnMEKL-0223 from Conus ventricosus (Mediterranean cone).